Consider the following 308-residue polypeptide: uncharacterized protein (308 aa).

The first 19 residues, 1–19, serve as a signal peptide directing secretion; it reads MKLLLILILIINNYNLCLS. N-linked (GlcNAc...) asparagine glycans are attached at residues N25 and N300.

It is found in the secreted. This is an uncharacterized protein from Dictyostelium discoideum (Social amoeba).